The primary structure comprises 778 residues: Jhy protein homolog (778 aa).

Disordered stretches follow at residues 62–271, 334–408, 631–654, and 721–746; these read DRIR…PKTD, QYES…LDTS, EKGKKHKKRSSSKNTKLKGYQKRD, and IPKPKPSNLTHQASKEQKNPTYAGKE. Over residues 118–139 the composition is skewed to basic and acidic residues; sequence PIEDKYSDLRYDPNWKSKKEEG. A compositionally biased stretch (low complexity) spans 223–234; that stretch reads SSLSPYVKSSSS. Positions 334–344 are enriched in polar residues; sequence QYESTKSSNVP. A compositionally biased stretch (basic residues) spans 358 to 371; that stretch reads SRRPAKLKIRKQCK. Polar residues predominate over residues 375 to 389; it reads GLKSSTTEEVTASQG. Over residues 390–402 the composition is skewed to low complexity; sequence NQNNPPRQQQNQN. The span at 633–650 shows a compositional bias: basic residues; it reads GKKHKKRSSSKNTKLKGY. Residues 733 to 746 are compositionally biased toward basic and acidic residues; that stretch reads ASKEQKNPTYAGKE.

In terms of biological role, required for the normal development of cilia in brain ependymal cells lining the ventricular surfaces. The sequence is that of Jhy protein homolog from Homo sapiens (Human).